Reading from the N-terminus, the 90-residue chain is Putative ATPase inhibitor, mitochondrial (90 aa).

A coiled-coil region spans residues 42–89 (ESREKAKEDFFVHQHEIEQLRKLKESLKLHREELDELESRVDKKMKSN).

It belongs to the ATPase inhibitor family.

The protein localises to the mitochondrion. In terms of biological role, forms a one-to-one complex with ATPase to inhibit the enzyme activity completely. The sequence is that of Putative ATPase inhibitor, mitochondrial (inh1) from Schizosaccharomyces pombe (strain 972 / ATCC 24843) (Fission yeast).